A 116-amino-acid chain; its full sequence is Cation channel sperm-associated auxiliary subunit TMEM262 (116 aa).

Over 1 to 16 (MWLQDRIATFFFPKGM) the chain is Cytoplasmic. A helical transmembrane segment spans residues 17 to 38 (MLTTAALMLFFLHLGIFIRDVH). The Extracellular segment spans residues 39–51 (NFCITYHYDHMSF). Residues 52–72 (HYTVVLMFSQVISICWAAMGS) traverse the membrane as a helical segment. Residues 73–84 (LYAEMTENKYVC) lie on the Cytoplasmic side of the membrane. The chain crosses the membrane as a helical span at residues 85–107 (FSALTILMLNGAMFFNRLSLEFL). Residues 108-116 (AIEYREEHH) lie on the Extracellular side of the membrane.

Component of the CatSper complex or CatSpermasome composed of the core pore-forming members CATSPER1, CATSPER2, CATSPER3 and CATSPER4 as well as auxiliary members CATSPERB, CATSPERG, CATSPERD, CATSPERE, CATSPERZ, C2CD6/CATSPERT, TMEM249, TMEM262 and EFCAB9. HSPA1 may be an additional auxiliary complex member. The core complex members CATSPER1, CATSPER2, CATSPER3 and CATSPER4 form a heterotetrameric channel. The auxiliary CATSPERB, CATSPERG, CATSPERD and CATSPERE subunits form a pavilion-like structure over the pore which stabilizes the complex through interactions with CATSPER4, CATSPER3, CATSPER1 and CATSPER2 respectively. TMEM262/CATSPERH interacts with CATSPERB, further stabilizing the complex. C2CD6/CATSPERT interacts at least with CATSPERD and is required for targeting the CatSper complex in the flagellar membrane.

It is found in the cell projection. It localises to the cilium. Its subcellular location is the flagellum membrane. In terms of biological role, auxiliary component of the CatSper complex, a complex involved in sperm cell hyperactivation. The protein is Cation channel sperm-associated auxiliary subunit TMEM262 of Homo sapiens (Human).